Here is a 379-residue protein sequence, read N- to C-terminus: ATP-sensitive inward rectifier potassium channel 10 (379 aa).

The Cytoplasmic segment spans residues 1 to 61 (MTSVAKVYYS…LKDLWTTFID (61 aa)). Residue R36 participates in 1,2-dioctanoyl-sn-glycero-3-phospho-(1D-myo-inositol-4,5-bisphosphate) binding. Residues 62 to 88 (MQWRYKLLLFSATFAGTWFLFGVVWYL) traverse the membrane as a helical segment. Residues 89–114 (VAVAHGDLLELGPPANHTPCVVQVHT) are Extracellular-facing. C108 and C140 are disulfide-bonded. The segment at residues 115-131 (LTGAFLFSLESQTTIGY) is an intramembrane region (discontinuously helical; Pore-forming). Positions 128-133 (TIGYGF) match the Selectivity filter motif. Residues 132–140 (GFRYISEEC) are Extracellular-facing. A helical membrane pass occupies residues 141–166 (PLAIVLLIAQLVLTTILEIFITGTFL). Topologically, residues 167–379 (AKIARPKKRA…SALSVRISNV (213 aa)) are cytoplasmic. 1,2-dioctanoyl-sn-glycero-3-phospho-(1D-myo-inositol-4,5-bisphosphate)-binding residues include K168, R171, and K173. 210–217 (GCQVTGKL) lines the ATP pocket.

This sequence belongs to the inward rectifier-type potassium channel (TC 1.A.2.1) family. KCNJ10 subfamily. In terms of assembly, homotetramer. In kidney cells, it forms heteromeric channels with Kir5.1/KCNJ16; this interaction is required for KCNJ16 localization to the basolateral membrane. Interacts with MAGI1, alone and possibly as a heteromer with KCNJ16; this interaction may facilitate KCNJ10/KCNJ16 potassium channel expression at the basolateral membrane in kidney cells. Interacts with PATJ. As to expression, predominantly expressed in the brain, including in glial cells of the cerebellum and forebrain. Expressed at lower levels in the kidney, and other peripheral tissues.

The protein localises to the membrane. It is found in the basolateral cell membrane. The enzyme catalyses K(+)(in) = K(+)(out). Its activity is regulated as follows. Channel activity is strongly regulated by variations of cytosolic pH; channels are activated by alkaline and inhibited by acidic pH values. Activated by phosphatidylinositol 4,5 biphosphate (PtdIns(4,5)P2). Inhibited by Ba(2+) and Cs(+). May be responsible for potassium buffering action of glial cells in the brain. Inward rectifier potassium channels are characterized by a greater tendency to allow potassium to flow into the cell rather than out of it. Their voltage dependence is regulated by the concentration of extracellular potassium; as external potassium is raised, the voltage range of the channel opening shifts to more positive voltages. The inward rectification is mainly due to the blockage of outward current by internal magnesium. Can be blocked by extracellular barium and cesium. In the kidney, together with KCNJ16, mediates basolateral K(+) recycling in distal tubules; this process is critical for Na(+) reabsorption at the tubules. This is ATP-sensitive inward rectifier potassium channel 10 from Rattus norvegicus (Rat).